A 25-amino-acid polypeptide reads, in one-letter code: Caerin 2.1 (25 aa).

As to expression, expressed by the skin dorsal glands.

It localises to the secreted. In terms of biological role, antibacterial peptide with narrow spectrum of activity. Active against the Gram-negative bacterium P.multocida (MIC=25 ug/ml). Inhibits the formation of NO by neuronal nitric oxide synthase with an IC(50) of 9 ug/ml. The chain is Caerin 2.1 from Litoria peronii (Emerald spotted tree frog).